The chain runs to 118 residues: Small ribosomal subunit protein uS13 (118 aa).

Residues 95-118 (LPLRGQRTRTNARTRKGPRKAIKK) are disordered.

It belongs to the universal ribosomal protein uS13 family. In terms of assembly, part of the 30S ribosomal subunit. Forms a loose heterodimer with protein S19. Forms two bridges to the 50S subunit in the 70S ribosome.

Its function is as follows. Located at the top of the head of the 30S subunit, it contacts several helices of the 16S rRNA. In the 70S ribosome it contacts the 23S rRNA (bridge B1a) and protein L5 of the 50S subunit (bridge B1b), connecting the 2 subunits; these bridges are implicated in subunit movement. Contacts the tRNAs in the A and P-sites. The sequence is that of Small ribosomal subunit protein uS13 from Xylella fastidiosa (strain 9a5c).